Consider the following 46-residue polypeptide: Protein PsbN (46 aa).

The helical transmembrane segment at 10–30 threads the bilayer; it reads VAIAVLAALLGLTGFGVYTAF.

Belongs to the PsbN family.

It localises to the cellular thylakoid membrane. Its function is as follows. May play a role in photosystem I and II biogenesis. The chain is Protein PsbN from Synechococcus sp. (strain WH7803).